A 522-amino-acid chain; its full sequence is Sugar transport protein 1 (522 aa).

Residues 1–22 (MPAGGFVVGDGQKAYPGKLTPF) are Cytoplasmic-facing. Residues 23 to 43 (VLFTCVVAAMGGLIFGYDIGI) form a helical membrane-spanning segment. The Extracellular portion of the chain corresponds to 44-79 (SGGVTSMPSFLKRFFPSVYRKQQEDASTNQYCQYDS). The helical transmembrane segment at 80 to 100 (PTLTMFTSSLYLAALISSLVA) threads the bilayer. The Cytoplasmic segment spans residues 101–117 (STVTRKFGRRLSMLFGG). Residues 118–138 (ILFCAGALINGFAKHVWMLIV) form a helical membrane-spanning segment. At 139–140 (GR) the chain is on the extracellular side. The helical transmembrane segment at 141 to 161 (ILLGFGIGFANQAVPLYLSEM) threads the bilayer. Residues 162-171 (APYKYRGALN) lie on the Cytoplasmic side of the membrane. A helical transmembrane segment spans residues 172-192 (IGFQLSITIGILVAEVLNYFF). At 193-202 (AKIKGGWGWR) the chain is on the extracellular side. A helical membrane pass occupies residues 203 to 223 (LSLGGAVVPALIITIGSLVLP). The Cytoplasmic segment spans residues 224–289 (DTPNSMIERG…YRPHLTMAVM (66 aa)). Ser-252 carries the post-translational modification Phosphoserine. The chain crosses the membrane as a helical span at residues 290–310 (IPFFQQLTGINVIMFYAPVLF). Over 311-321 (NTIGFTTDASL) the chain is Extracellular. The helical transmembrane segment at 322-342 (MSAVVTGSVNVAATLVSIYGV) threads the bilayer. Residues 343–348 (DRWGRR) are Cytoplasmic-facing. Residues 349–369 (FLFLEGGTQMLICQAVVAACI) form a helical membrane-spanning segment. At 370-384 (GAKFGVDGTPGELPK) the chain is on the extracellular side. The helical transmembrane segment at 385-405 (WYAIVVVTFICIYVAGFAWSW) threads the bilayer. At 406–427 (GPLGWLVPSEIFPLEIRSAAQS) the chain is on the cytoplasmic side. The helical transmembrane segment at 428-448 (ITVSVNMIFTFIIAQIFLTML) threads the bilayer. The Extracellular segment spans residues 449–452 (CHLK). The chain crosses the membrane as a helical span at residues 453–473 (FGLFLVFAFFVVVMSIFVYIF). Residues 474-522 (LPETKGIPIEEMGQVWRSHWYWSRFVEDGEYGNALEMGKNSNQAGTKHV) are Cytoplasmic-facing.

The protein belongs to the major facilitator superfamily. Sugar transporter (TC 2.A.1.1) family. Mostly expressed in young leaves, especially in guard cells (at protein level). Also present in roots.

Its subcellular location is the cell membrane. Functionally, major hexose transporter. Mediates an active uptake of hexoses, by sugar/hydrogen symport. Can transport glucose, 3-O-methylglucose, fructose, xylose, mannose, galactose, fucose, 2-deoxyglucose and arabinose. Confers sensitivity to galactose in seedlings. This Arabidopsis thaliana (Mouse-ear cress) protein is Sugar transport protein 1 (STP1).